The primary structure comprises 298 residues: DDRGK domain-containing protein 1 (298 aa).

Topologically, residues 1 to 2 (ME) are lumenal. The helical transmembrane segment at 3–23 (EIFALIVSMILIVAVIPLFFW) threads the bilayer. The Cytoplasmic segment spans residues 24 to 298 (KRRRDARSRE…ISGMEEISVS (275 aa)). The interval 31–155 (SREEVAEPPQ…EEEKARQAKE (125 aa)) is disordered. The segment covering 101 to 155 (KRQEREAQRQAEEATRESRNTKQDWYAEMRRKKDEEREAEELKLEEEEKARQAKE) has biased composition (basic and acidic residues).

The protein belongs to the DDRGK1 family.

It localises to the endoplasmic reticulum membrane. Substrate adapter for ufmylation, the covalent attachment of the ubiquitin-like modifier UFM1 to substrate proteins. The chain is DDRGK domain-containing protein 1 from Arabidopsis thaliana (Mouse-ear cress).